Reading from the N-terminus, the 172-residue chain is C-phycocyanin beta chain (172 aa).

At Asn72 the chain carries N4-methylasparagine. 2 residues coordinate (2R,3E)-phycocyanobilin: Cys82 and Cys153.

This sequence belongs to the phycobiliprotein family. As to quaternary structure, heterodimer of an alpha and a beta subunit, which further assembles into trimers and the trimers into hexamers. The basic functional unit of phycobiliproteins is a ring-shaped hexamer formed from two back-to-back trimers contacting via the alpha chain subunits. The trimers are composed of alpha/beta subunit heterodimers arranged around a three-fold axis of symmetry. The phycoerythrins also contain a gamma subunit which is located in the center of the hexamer. Contains two covalently linked bilin chromophores.

Its subcellular location is the plastid. It localises to the chloroplast thylakoid membrane. Light-harvesting photosynthetic bile pigment-protein from the phycobiliprotein complex (phycobilisome, PBS). Phycocyanin is the major phycobiliprotein in the PBS rod. This is C-phycocyanin beta chain (cpcB) from Rhodella violacea (Red alga).